Consider the following 1130-residue polypeptide: Putative protein tag-278 (1130 aa).

Disordered regions lie at residues 1–92, 104–129, and 974–1130; these read MSRS…DIDN, VARE…ELKR, and NELI…AWKF. Coiled-coil stretches lie at residues 121-779 and 805-1061; these read AGRE…EEIK and EERE…ARAK. A compositionally biased stretch (basic and acidic residues) spans 983-993; that stretch reads RQTDESTSEPH. Polar residues predominate over residues 999–1011; it reads SITSHGVFQNFVS. Composition is skewed to basic and acidic residues over residues 1013 to 1057 and 1068 to 1081; these read MKDK…EKSP and RLRD…KSDN. The segment covering 1082-1095 has biased composition (low complexity); it reads LESTPSSSSRNLLS. Over residues 1116–1130 the composition is skewed to basic and acidic residues; that stretch reads TKKDSSSEKRPAWKF.

The sequence is that of Putative protein tag-278 (tag-278) from Caenorhabditis elegans.